A 700-amino-acid chain; its full sequence is Small ribosomal subunit protein uS3c (700 aa).

Insert stretches follow at residues 88–196 (NCHM…LGKF) and 282–587 (KPCT…FQTR).

This sequence belongs to the universal ribosomal protein uS3 family. Part of the 30S ribosomal subunit.

Its subcellular location is the plastid. It is found in the chloroplast. In Tetradesmus obliquus (Green alga), this protein is Small ribosomal subunit protein uS3c (rps3).